The following is a 607-amino-acid chain: Ceramide kinase (607 aa).

The DAGKc domain occupies 135-358; that stretch reads DRPKSLMVFV…LDIAQVVRWK (224 aa). ATP contacts are provided by residues 145-149, Thr176, and 205-211; these read HPLCG and GDGLFNE. Position 204–207 (204–207) interacts with substrate; sequence GGDG. The active-site Proton donor/acceptor is the Asp206. A disordered region spans residues 247–297; sequence NDLSNSELTGDDANAISGSSNTPDDHEPLLSTTRSTGLDISSSDSSDEPCN. Polar residues predominate over residues 276 to 286; it reads LSTTRSTGLDI. An ATP-binding site is contributed by Ser320. Positions 454–461 match the CXXXCXXC motif; the sequence is CRTNCLIC.

Ca(2+) is required as a cofactor. The cofactor is Mg(2+). As to expression, highly expressed in leaves and at lower levels in stems.

It carries out the reaction an N-acylsphing-4-enine + ATP = an N-acylsphing-4-enine 1-phosphate + ADP + H(+). Its function is as follows. Catalyzes specifically the phosphorylation of ceramide to form ceramide 1-phosphate. Possesses activity on ceramide analog (C6 synthetic ceramide) in vitro. Ceramide is a critical sphingolipid metabolite that induces programmed cell death (PCD) in plants and ceramide-1-phosphate has a PCD suppressive effect. Thus, ceramide phosphorylation plays a role in the modulation of PCD and CERK activity is crucial for the maintenance of cell viability. In Oryza sativa subsp. japonica (Rice), this protein is Ceramide kinase (CERK).